The sequence spans 474 residues: MAGKTLYDKLWDSHLVKQRDDGSALIYIDRHIIHEVTSPQAFEGLRLAKRKPWRIDSIIATPDHNVPTTAERKGGIGAIEDQVSRLQVQTLDDNCDEYGITEFKMNDPRQGIVHVIGPEQGATLPGMSVVCGDSHTSTHGAFGALAHGIGTSEVEHVLATQCLVAKKMKNMLVSVEGQLPFGVTAKDIVLAVIGKIGTAGGNGYAIEFAGSAIRDLSIEGRMTICNMSIEAGARVGMVATDEKTVEYVKGRPFAPKGAEWDLAVEAWKDLVSDPDAVFDTVVRLDAAQIKPQVSWGTSPEMVLAVDQNVPDPAQEPDLVKRGSIERALKYMGLKANQPITDIQLDRVFIGSCTNSRIEDLRAAADVAKGRKVASTIKQAIVVPGSGLIKAQAEKEGLDKVFIEAGFEWREPGCSMCLAMNPDRLGSGEHCASTSNRNFEGRQGAGGRTHLVSPAMAAAAAVNGRFIDVRDLIQH.

Residues Cys352, Cys413, and Cys416 each coordinate [4Fe-4S] cluster.

The protein belongs to the aconitase/IPM isomerase family. LeuC type 1 subfamily. In terms of assembly, heterodimer of LeuC and LeuD. [4Fe-4S] cluster serves as cofactor.

The catalysed reaction is (2R,3S)-3-isopropylmalate = (2S)-2-isopropylmalate. The protein operates within amino-acid biosynthesis; L-leucine biosynthesis; L-leucine from 3-methyl-2-oxobutanoate: step 2/4. Functionally, catalyzes the isomerization between 2-isopropylmalate and 3-isopropylmalate, via the formation of 2-isopropylmaleate. The chain is 3-isopropylmalate dehydratase large subunit from Pseudomonas syringae pv. syringae (strain B728a).